Consider the following 505-residue polypeptide: Ookinete surface protein PIMMS43 (505 aa).

Residues 1-24 form the signal peptide; sequence MQKRIYVSLFFLVFFLSKISVVLS. Residues 188–221 are disordered; it reads ERRKKKLDDEQKRQKDLEDTNRKENDEEQSYKKL. A helical membrane pass occupies residues 485–505; it reads SSIYSSIKYFFLLMLFVIYIL.

In terms of assembly, monomer. May form multimers with an unknown protein(s).

It localises to the membrane. In terms of biological role, involved in ookinete evasion of the mosquito complement-like response, oocyst maturation, sporozoite development and infectivity. In Plasmodium falciparum (isolate 3D7), this protein is Ookinete surface protein PIMMS43.